A 575-amino-acid chain; its full sequence is Cyclic nucleotide-gated channel alpha-4 (575 aa).

Residues M1–L38 are Cytoplasmic-facing. A helical membrane pass occupies residues N39 to D60. Over L61 to F70 the chain is Extracellular. Residues V71–G91 form a helical membrane-spanning segment. Over F92–L116 the chain is Cytoplasmic. A helical transmembrane segment spans residues L117–H135. Topologically, residues I136–R140 are extracellular. A helical transmembrane segment spans residues L141–T159. Residues R160–A166 are Cytoplasmic-facing. Positions P164–M272 are ion conduction pathway. The helical transmembrane segment at F167–L190 threads the bilayer. The Extracellular segment spans residues S191–R213. A run of 2 helical transmembrane segments spans residues L214–V248 and G249–N273. The selectivity filter stretch occupies residues T231–D234. Residues T274–Q350 form a C-linker region. Topologically, residues T274–E575 are cytoplasmic. An IQ-type motif is present at residues L292–R302. I348–I471 serves as a coordination point for a nucleoside 3',5'-cyclic phosphate. Residues A354–K474 form a cyclic nucleotide-binding domain region. 4 residues coordinate 3',5'-cyclic GMP: G414, S417, R430, and T431. Residues R430 and T431 each coordinate 3',5'-cyclic AMP. A coiled-coil region spans residues T493 to E547. The segment at R537–E575 is disordered. Residues D544–P554 are compositionally biased toward acidic residues.

It belongs to the cyclic nucleotide-gated cation channel (TC 1.A.1.5) family. CNGA4 subfamily. As to quaternary structure, the olfactory cyclic nucleotide-gated channel is an heterotetramer composed of CNGA2, CNGA4 and CNGB1b subunits with 2:1:1 stoichiometry. May form homomeric channels gated by nitric oxide. In terms of processing, N-glycosylated. As to expression, olfactory neurons. Expressed in olfactory sensory cilia (at protein level).

The protein localises to the cell projection. It is found in the cilium membrane. The catalysed reaction is Ca(2+)(in) = Ca(2+)(out). The enzyme catalyses Na(+)(in) = Na(+)(out). It catalyses the reaction K(+)(in) = K(+)(out). It carries out the reaction NH4(+)(in) = NH4(+)(out). The catalysed reaction is Rb(+)(in) = Rb(+)(out). The enzyme catalyses Li(+)(in) = Li(+)(out). It catalyses the reaction Cs(+)(in) = Cs(+)(out). With respect to regulation, ca(2+)-calmodulin exerts its inhibitory effect in cAMP sensitivity by binding to IQ-like motif of CNGA4 and preferably binds to the channel in the closed state. Inhibition by PIP3 of the CNG channel probably occurs via CGNA2 binding. Ca(2+) currents are inhibited by pimozide, an L-type Ca(2+) channel blocker. Its function is as follows. Pore-forming subunit of the olfactory cyclic nucleotide-gated channel. Operates in the cilia of olfactory sensory neurons where chemical stimulation of the odorant is converted to an electrical signal. Mediates odorant-induced cAMP-dependent Ca(2+) influx triggering neuron depolarization. The rise of intracellular Ca(2+) levels potentiates the olfactory response by activating Ca(2+)-dependent Cl(-) channels, but it also serves as a negative feedback signal to desensitize the channel for rapid adaptation to odorants. Conducts cAMP- and cGMP-gated ion currents, with permeability for monovalent and divalent cations. May conduct nitric oxide-gated Ca(2+) currents relevant to neurons of vomeronasal organ, a system involved in the perception of pheromones. This chain is Cyclic nucleotide-gated channel alpha-4, found in Rattus norvegicus (Rat).